The primary structure comprises 255 residues: Sugar fermentation stimulation protein homolog (255 aa).

It belongs to the SfsA family.

The chain is Sugar fermentation stimulation protein homolog from Synechococcus sp. (strain WH7803).